The chain runs to 57 residues: Small ribosomal subunit protein bS21 (57 aa).

Residues 22–57 (QCSKSGVLSEAKKRKHYEKPSEKRKRKATEKRNSRK) are disordered. The span at 33–57 (KKRKHYEKPSEKRKRKATEKRNSRK) shows a compositional bias: basic residues.

The protein belongs to the bacterial ribosomal protein bS21 family.

In Natranaerobius thermophilus (strain ATCC BAA-1301 / DSM 18059 / JW/NM-WN-LF), this protein is Small ribosomal subunit protein bS21.